The following is a 24-amino-acid chain: Brevinin-1SY (24 aa).

A disulfide bridge links Cys18 with Cys24.

In terms of tissue distribution, expressed by the skin glands.

The protein resides in the secreted. In terms of biological role, antibacterial activity against Gram-positive bacterium S.aureus and Gram-negative bacterium E.coli. The chain is Brevinin-1SY from Lithobates sylvaticus (Wood frog).